The following is a 308-amino-acid chain: Cytochrome b (308 aa).

The next 4 membrane-spanning stretches (helical) occupy residues 1–21, 45–66, 81–101, and 146–166; these read FGSL…LLAM, WLIR…YLHI, WNIG…GYVL, and FFAL…IHLT. Positions 51 and 65 each coordinate heme b. Heme b contacts are provided by His-150 and His-164. His-169 contributes to the a ubiquinone binding site. Helical transmembrane passes span 194-214, 256-276, and 288-308; these read TKDA…AMFS, LGGV…PLLH, and LSQF…WIGS.

Belongs to the cytochrome b family. As to quaternary structure, the cytochrome bc1 complex contains 11 subunits: 3 respiratory subunits (MT-CYB, CYC1 and UQCRFS1), 2 core proteins (UQCRC1 and UQCRC2) and 6 low-molecular weight proteins (UQCRH/QCR6, UQCRB/QCR7, UQCRQ/QCR8, UQCR10/QCR9, UQCR11/QCR10 and a cleavage product of UQCRFS1). This cytochrome bc1 complex then forms a dimer. Heme b is required as a cofactor.

It localises to the mitochondrion inner membrane. In terms of biological role, component of the ubiquinol-cytochrome c reductase complex (complex III or cytochrome b-c1 complex) that is part of the mitochondrial respiratory chain. The b-c1 complex mediates electron transfer from ubiquinol to cytochrome c. Contributes to the generation of a proton gradient across the mitochondrial membrane that is then used for ATP synthesis. This is Cytochrome b (MT-CYB) from Zaratornis stresemanni (White-cheeked cotinga).